The chain runs to 48 residues: Cuticle protein 10 (48 aa).

The chain is Cuticle protein 10 from Limulus polyphemus (Atlantic horseshoe crab).